A 338-amino-acid chain; its full sequence is UDP-glucose 4-epimerase (338 aa).

Residues 11–12 (YI), 31–36 (DNLCNS), 58–59 (DI), 80–84 (FAGLK), Asn-99, Ser-124, Tyr-149, Lys-153, and Phe-178 contribute to the NAD(+) site. Ser-124 and Tyr-149 together coordinate substrate. The Proton acceptor role is filled by Tyr-149. Residues Asn-179, 199–200 (NL), 216–218 (SVF), Arg-231, and 292–295 (RSGD) contribute to the substrate site.

Belongs to the NAD(P)-dependent epimerase/dehydratase family. In terms of assembly, homodimer. Requires NAD(+) as cofactor.

The catalysed reaction is UDP-alpha-D-glucose = UDP-alpha-D-galactose. It functions in the pathway carbohydrate metabolism; galactose metabolism. Its function is as follows. Involved in the metabolism of galactose. Catalyzes the conversion of UDP-galactose (UDP-Gal) to UDP-glucose (UDP-Glc) through a mechanism involving the transient reduction of NAD. By controlling the internal galactose concentration, it may be linked to the biosynthesis of lipopolysaccharide surface molecules, which are important for the pathogenesis of H.influenzae. The sequence is that of UDP-glucose 4-epimerase (galE) from Haemophilus influenzae (strain ATCC 51907 / DSM 11121 / KW20 / Rd).